The primary structure comprises 155 residues: 6,7-dimethyl-8-ribityllumazine synthase (155 aa).

Residues phenylalanine 24, 58–60 (AFE), and 82–84 (VII) each bind 5-amino-6-(D-ribitylamino)uracil. Position 87–88 (87–88 (ST)) interacts with (2S)-2-hydroxy-3-oxobutyl phosphate. Residue histidine 90 is the Proton donor of the active site. Position 115 (phenylalanine 115) interacts with 5-amino-6-(D-ribitylamino)uracil. A (2S)-2-hydroxy-3-oxobutyl phosphate-binding site is contributed by arginine 129.

It belongs to the DMRL synthase family.

It catalyses the reaction (2S)-2-hydroxy-3-oxobutyl phosphate + 5-amino-6-(D-ribitylamino)uracil = 6,7-dimethyl-8-(1-D-ribityl)lumazine + phosphate + 2 H2O + H(+). The protein operates within cofactor biosynthesis; riboflavin biosynthesis; riboflavin from 2-hydroxy-3-oxobutyl phosphate and 5-amino-6-(D-ribitylamino)uracil: step 1/2. Functionally, catalyzes the formation of 6,7-dimethyl-8-ribityllumazine by condensation of 5-amino-6-(D-ribitylamino)uracil with 3,4-dihydroxy-2-butanone 4-phosphate. This is the penultimate step in the biosynthesis of riboflavin. This is 6,7-dimethyl-8-ribityllumazine synthase from Chlorobium limicola (strain DSM 245 / NBRC 103803 / 6330).